Here is a 466-residue protein sequence, read N- to C-terminus: 3-isopropylmalate dehydratase large subunit (466 aa).

3 residues coordinate [4Fe-4S] cluster: cysteine 347, cysteine 407, and cysteine 410.

This sequence belongs to the aconitase/IPM isomerase family. LeuC type 1 subfamily. Heterodimer of LeuC and LeuD. [4Fe-4S] cluster serves as cofactor.

It carries out the reaction (2R,3S)-3-isopropylmalate = (2S)-2-isopropylmalate. It functions in the pathway amino-acid biosynthesis; L-leucine biosynthesis; L-leucine from 3-methyl-2-oxobutanoate: step 2/4. In terms of biological role, catalyzes the isomerization between 2-isopropylmalate and 3-isopropylmalate, via the formation of 2-isopropylmaleate. This Escherichia coli O17:K52:H18 (strain UMN026 / ExPEC) protein is 3-isopropylmalate dehydratase large subunit.